A 413-amino-acid chain; its full sequence is Multifunctional CCA protein (413 aa).

ATP-binding residues include glycine 8 and arginine 11. CTP is bound by residues glycine 8 and arginine 11. Residues aspartate 21 and aspartate 23 each contribute to the Mg(2+) site. Residues arginine 91, arginine 143, and arginine 146 each contribute to the ATP site. Residues arginine 91, arginine 143, and arginine 146 each coordinate CTP. In terms of domain architecture, HD spans 232–333 (TGVHVMMVVD…VRFFERTDAL (102 aa)).

Belongs to the tRNA nucleotidyltransferase/poly(A) polymerase family. Bacterial CCA-adding enzyme type 1 subfamily. As to quaternary structure, monomer. Can also form homodimers and oligomers. Requires Mg(2+) as cofactor. Ni(2+) serves as cofactor.

It catalyses the reaction a tRNA precursor + 2 CTP + ATP = a tRNA with a 3' CCA end + 3 diphosphate. The catalysed reaction is a tRNA with a 3' CCA end + 2 CTP + ATP = a tRNA with a 3' CCACCA end + 3 diphosphate. In terms of biological role, catalyzes the addition and repair of the essential 3'-terminal CCA sequence in tRNAs without using a nucleic acid template. Adds these three nucleotides in the order of C, C, and A to the tRNA nucleotide-73, using CTP and ATP as substrates and producing inorganic pyrophosphate. tRNA 3'-terminal CCA addition is required both for tRNA processing and repair. Also involved in tRNA surveillance by mediating tandem CCA addition to generate a CCACCA at the 3' terminus of unstable tRNAs. While stable tRNAs receive only 3'-terminal CCA, unstable tRNAs are marked with CCACCA and rapidly degraded. This Burkholderia multivorans (strain ATCC 17616 / 249) protein is Multifunctional CCA protein.